The primary structure comprises 273 residues: 4-hydroxy-tetrahydrodipicolinate reductase (273 aa).

NAD(+)-binding positions include 12–17 (GAGGRM) and glutamate 38. Arginine 39 serves as a coordination point for NADP(+). NAD(+)-binding positions include 102–104 (GTT) and 126–129 (AANF). The active-site Proton donor/acceptor is histidine 159. Histidine 160 contributes to the (S)-2,3,4,5-tetrahydrodipicolinate binding site. Residue lysine 163 is the Proton donor of the active site. 169-170 (GT) is a binding site for (S)-2,3,4,5-tetrahydrodipicolinate.

Belongs to the DapB family. Homotetramer.

The protein resides in the cytoplasm. The catalysed reaction is (S)-2,3,4,5-tetrahydrodipicolinate + NAD(+) + H2O = (2S,4S)-4-hydroxy-2,3,4,5-tetrahydrodipicolinate + NADH + H(+). It catalyses the reaction (S)-2,3,4,5-tetrahydrodipicolinate + NADP(+) + H2O = (2S,4S)-4-hydroxy-2,3,4,5-tetrahydrodipicolinate + NADPH + H(+). Its pathway is amino-acid biosynthesis; L-lysine biosynthesis via DAP pathway; (S)-tetrahydrodipicolinate from L-aspartate: step 4/4. Its function is as follows. Catalyzes the conversion of 4-hydroxy-tetrahydrodipicolinate (HTPA) to tetrahydrodipicolinate. The polypeptide is 4-hydroxy-tetrahydrodipicolinate reductase (Yersinia pestis bv. Antiqua (strain Antiqua)).